A 217-amino-acid chain; its full sequence is Large ribosomal subunit protein uL3 (217 aa).

Belongs to the universal ribosomal protein uL3 family. Part of the 50S ribosomal subunit. Forms a cluster with proteins L14 and L19.

In terms of biological role, one of the primary rRNA binding proteins, it binds directly near the 3'-end of the 23S rRNA, where it nucleates assembly of the 50S subunit. In Mycolicibacterium paratuberculosis (strain ATCC BAA-968 / K-10) (Mycobacterium paratuberculosis), this protein is Large ribosomal subunit protein uL3.